The chain runs to 223 residues: Alpha-S2-casein (223 aa).

An N-terminal signal peptide occupies residues M1–A15. Phosphoserine is present on residues S23, S24, S25, S72, S73, S74, S77, S145, S147, S151, and S159. The segment at residues S77 to R141 is a repeat. The stretch at residues S159–L223 is a repeat.

The protein belongs to the alpha-casein family. Mammary gland specific. Secreted in milk.

It is found in the secreted. Important role in the capacity of milk to transport calcium phosphate. In Capra hircus (Goat), this protein is Alpha-S2-casein (CSN1S2).